A 351-amino-acid polypeptide reads, in one-letter code: Foldase protein PrsA 1 (351 aa).

Residues 1–22 form the signal peptide; that stretch reads MKNSNKLIASVVTLASVMALAA. A lipid anchor (N-palmitoyl cysteine) is attached at cysteine 23. Cysteine 23 carries S-diacylglycerol cysteine lipidation. Positions 145 to 240 constitute a PpiC domain; the sequence is TPTMAVEMIT…KKFYIVKVTK (96 aa). 2 stretches are compositionally biased toward low complexity: residues 303–317 and 326–351; these read KTKAASESSTTSESS and ESEQTQTSSAEEPTETEAQTQEPAAQ. The disordered stretch occupies residues 303 to 351; that stretch reads KTKAASESSTTSESSKAAEENPSESEQTQTSSAEEPTETEAQTQEPAAQ.

It belongs to the PrsA family.

It localises to the cell membrane. It catalyses the reaction [protein]-peptidylproline (omega=180) = [protein]-peptidylproline (omega=0). Plays a major role in protein secretion by helping the post-translocational extracellular folding of several secreted proteins. This chain is Foldase protein PrsA 1 (prsA1), found in Streptococcus pyogenes serotype M1.